The primary structure comprises 147 residues: Phosphoribosyl-AMP cyclohydrolase (147 aa).

Aspartate 91 serves as a coordination point for Mg(2+). Cysteine 92 contributes to the Zn(2+) binding site. Mg(2+) is bound by residues aspartate 93 and aspartate 95. Zn(2+) is bound by residues cysteine 109 and cysteine 116.

The protein belongs to the PRA-CH family. In terms of assembly, homodimer. The cofactor is Mg(2+). Requires Zn(2+) as cofactor.

It localises to the cytoplasm. It carries out the reaction 1-(5-phospho-beta-D-ribosyl)-5'-AMP + H2O = 1-(5-phospho-beta-D-ribosyl)-5-[(5-phospho-beta-D-ribosylamino)methylideneamino]imidazole-4-carboxamide. Its pathway is amino-acid biosynthesis; L-histidine biosynthesis; L-histidine from 5-phospho-alpha-D-ribose 1-diphosphate: step 3/9. Its function is as follows. Catalyzes the hydrolysis of the adenine ring of phosphoribosyl-AMP. The protein is Phosphoribosyl-AMP cyclohydrolase of Rhodopseudomonas palustris (strain BisA53).